The following is a 192-amino-acid chain: Putative metal-sulfur cluster biosynthesis proteins YuaD (192 aa).

Residues 15–179 (ADTKSFVTKQ…VYTGDEIEVH (165 aa)) enclose the MOSC domain.

The protein is Putative metal-sulfur cluster biosynthesis proteins YuaD (yuaD) of Bacillus subtilis (strain 168).